The sequence spans 129 residues: Fluoride-specific ion channel FluC (129 aa).

4 helical membrane-spanning segments follow: residues 8-28, 36-56, 71-91, and 103-123; these read FFCV…MVLA, AFPF…GLLL, FLGV…VEVV, and ALHI…AMML. The Na(+) site is built by G78 and T81.

It belongs to the fluoride channel Fluc/FEX (TC 1.A.43) family.

It is found in the cell inner membrane. It catalyses the reaction fluoride(in) = fluoride(out). With respect to regulation, na(+) is not transported, but it plays an essential structural role and its presence is essential for fluoride channel function. In terms of biological role, fluoride-specific ion channel. Important for reducing fluoride concentration in the cell, thus reducing its toxicity. The sequence is that of Fluoride-specific ion channel FluC from Idiomarina loihiensis (strain ATCC BAA-735 / DSM 15497 / L2-TR).